The chain runs to 514 residues: Membrane-bound lytic murein transglycosylase F (514 aa).

The first 30 residues, 1–30 (MKKLKINYLFIGILTLLLAAALWPSIPWFG), serve as a signal peptide directing secretion. The segment at 31–269 (KTENHIAAIQ…RIEEKYLGHG (239 aa)) is non-LT domain. The segment at 270–514 (DDFDYVDTRS…LFTPQKKEEK (245 aa)) is LT domain. Glu-314 is an active-site residue.

The protein in the N-terminal section; belongs to the bacterial solute-binding protein 3 family. This sequence in the C-terminal section; belongs to the transglycosylase Slt family.

Its subcellular location is the cell outer membrane. It carries out the reaction Exolytic cleavage of the (1-&gt;4)-beta-glycosidic linkage between N-acetylmuramic acid (MurNAc) and N-acetylglucosamine (GlcNAc) residues in peptidoglycan, from either the reducing or the non-reducing ends of the peptidoglycan chains, with concomitant formation of a 1,6-anhydrobond in the MurNAc residue.. Its function is as follows. Murein-degrading enzyme that degrades murein glycan strands and insoluble, high-molecular weight murein sacculi, with the concomitant formation of a 1,6-anhydromuramoyl product. Lytic transglycosylases (LTs) play an integral role in the metabolism of the peptidoglycan (PG) sacculus. Their lytic action creates space within the PG sacculus to allow for its expansion as well as for the insertion of various structures such as secretion systems and flagella. The sequence is that of Membrane-bound lytic murein transglycosylase F from Salmonella choleraesuis (strain SC-B67).